Reading from the N-terminus, the 215-residue chain is MSKQADSLGFEQDAKPENVVWHRHAVDKAQRATLKQQRPAVLWFTGLSGAGKSTVAGALENRLAALGYHTYLLDGDNVRHGLCSDLGFSEQDRRENIRRIGELAKLMSDAGLIVLTAFISPHRAERQMVRDLLPNGEFLEVYVNTSLDVCEARDPKGLYKKARAGEIRQFTGIDSAYEAPLNPDIDLPAGEKSVDELVAQCLQALAERHIIQRWV.

An ATP-binding site is contributed by 46-53; sequence GLSGAGKS. S120 acts as the Phosphoserine intermediate in catalysis.

This sequence belongs to the APS kinase family.

The catalysed reaction is adenosine 5'-phosphosulfate + ATP = 3'-phosphoadenylyl sulfate + ADP + H(+). It functions in the pathway sulfur metabolism; hydrogen sulfide biosynthesis; sulfite from sulfate: step 2/3. Its function is as follows. Catalyzes the synthesis of activated sulfate. The protein is Adenylyl-sulfate kinase (cysC) of Vibrio cholerae serotype O1 (strain ATCC 39315 / El Tor Inaba N16961).